The primary structure comprises 186 residues: MGLKSDKWIREQSIENQMIEPFCEENIGKGVVSYGLSSYGYDIRVGCEFKIFTNIGGTVVDPKNFDEKNVVDFIGDICIVPPNSFALARTVEYFKMPHDVLAICLGKSTYARCGIIVNVTPFEPGFNGHITIEISNTTPLPAKIYANEGIAQVLFLQGDEPCETSYADKKGKYQDQEGITLPRILK.

107–112 (KSTYAR) lines the dCTP pocket. The active-site Proton donor/acceptor is glutamate 133. DCTP is bound by residues glutamine 152, tyrosine 166, and glutamine 176.

It belongs to the dCTP deaminase family. Homotrimer.

The enzyme catalyses dCTP + H2O + H(+) = dUTP + NH4(+). Its pathway is pyrimidine metabolism; dUMP biosynthesis; dUMP from dCTP (dUTP route): step 1/2. Its function is as follows. Catalyzes the deamination of dCTP to dUTP. The chain is dCTP deaminase from Campylobacter fetus subsp. fetus (strain 82-40).